Consider the following 386-residue polypeptide: DNA-directed RNA polymerase subunit Rpo1C (386 aa).

Belongs to the RNA polymerase beta' chain family. As to quaternary structure, part of the RNA polymerase complex.

It is found in the cytoplasm. The enzyme catalyses RNA(n) + a ribonucleoside 5'-triphosphate = RNA(n+1) + diphosphate. Functionally, DNA-dependent RNA polymerase (RNAP) catalyzes the transcription of DNA into RNA using the four ribonucleoside triphosphates as substrates. Forms part of the jaw domain. The polypeptide is DNA-directed RNA polymerase subunit Rpo1C (Methanococcus maripaludis (strain DSM 14266 / JCM 13030 / NBRC 101832 / S2 / LL)).